We begin with the raw amino-acid sequence, 299 residues long: ATP phosphoribosyltransferase (299 aa).

This sequence belongs to the ATP phosphoribosyltransferase family. Long subfamily. Mg(2+) serves as cofactor.

Its subcellular location is the cytoplasm. The catalysed reaction is 1-(5-phospho-beta-D-ribosyl)-ATP + diphosphate = 5-phospho-alpha-D-ribose 1-diphosphate + ATP. It participates in amino-acid biosynthesis; L-histidine biosynthesis; L-histidine from 5-phospho-alpha-D-ribose 1-diphosphate: step 1/9. With respect to regulation, feedback inhibited by histidine. Catalyzes the condensation of ATP and 5-phosphoribose 1-diphosphate to form N'-(5'-phosphoribosyl)-ATP (PR-ATP). Has a crucial role in the pathway because the rate of histidine biosynthesis seems to be controlled primarily by regulation of HisG enzymatic activity. The sequence is that of ATP phosphoribosyltransferase from Shewanella pealeana (strain ATCC 700345 / ANG-SQ1).